A 316-amino-acid polypeptide reads, in one-letter code: Pantothenate kinase (316 aa).

95–102 (GSVAVGKS) contributes to the ATP binding site.

This sequence belongs to the prokaryotic pantothenate kinase family.

The protein localises to the cytoplasm. It catalyses the reaction (R)-pantothenate + ATP = (R)-4'-phosphopantothenate + ADP + H(+). The protein operates within cofactor biosynthesis; coenzyme A biosynthesis; CoA from (R)-pantothenate: step 1/5. This Salmonella choleraesuis (strain SC-B67) protein is Pantothenate kinase.